The sequence spans 78 residues: Serine rich endogenous peptide 12 (78 aa).

Positions 1-24 (MRNTISSKMGQVLIVLLLLCTVLC) are cleaved as a signal peptide. Positions 25–43 (RTESALPSGQHSVLLTGRR) are cleaved as a propeptide — removed in mature form. The segment at 47 to 78 (SGASGPVRSSQSSQAGGRFNDADPIAIDYGKY) is disordered. The SCOOP motif signature appears at 50–64 (SGPVRSSQSSQAGGR). The SxS motif essential for MIK2 binding signature appears at 56 to 58 (SQS).

The protein belongs to the serine rich endogenous peptide (SCOOP) phytocytokine family. In terms of assembly, interacts with MIK2 (via extracellular leucine-rich repeat domain); this interaction triggers the formation of complex between MIK2 and the BAK1/SERK3 and SERK4 coreceptors, and subsequent BAK1 activation by phosphorylation on 'Ser-612'. Mostly expressed in the whole root system, and, to a lower extent, in seedlings shoots.

It localises to the cell membrane. The protein localises to the secreted. Its subcellular location is the extracellular space. The protein resides in the apoplast. In terms of biological role, brassicaceae-specific phytocytokine (plant endogenous peptide released into the apoplast) perceived by MIK2 in a BAK1/SERK3 and SERK4 coreceptors-dependent manner, that modulates various physiological and antimicrobial processes including root growth prevention, phospholipid signaling pathway activation (e.g. accumulation of phosphatidic acid (PA), but transient reduction of phosphatidylinositol 4,5-bisphosphate (PIP(2)) levels) and reactive oxygen species (ROS) response regulation. Moderates primary root growth, and regulates root meristems and cell elongation; this root growth regulation is associated with the modulation of ROS metabolism and alteration of cell wall structure, and depends on variations in many genes expression. Promotes ROS (e.g. superoxide anion O(2) and hydrogen peroxide H(2)O(2)) production and MAPK (e.g. MPK3, MPK4 and MPK6) activation in a MIK2-dependent manner, thus leading to the up-regulation of immune-related marker genes (e.g. WRKY30, WRKY33 and CYP81F2). Involved in biotic and oxidative stress responses; acts as a negative regulator of defense against necrotrophic pathogens such as the bacteria Erwinia amylovora and the fungus Alternaria brassicicola. Able to prime defense responses against the pathogenic bacteria Pseudomonas syringae pv. tomato DC3000. Contributes to the triggering of defense responses toward generalist herbivores such as Spodoptera littoralis, probably via the activation of jasmonate and indole glucosinolate biosynthesis. Triggers the expression of several PROSCOOP genes (e.g. PROSCOOP3, PROSCOOP7, PROSCOOP12 and PROSCOOP13). The sequence is that of Serine rich endogenous peptide 12 from Arabidopsis thaliana (Mouse-ear cress).